The chain runs to 134 residues: Interleukin-4 (134 aa).

The first 23 residues, 1–23 (MGLTYQLLPALVCLLACTSFIQG), serve as a signal peptide directing secretion. 2 disulfides stabilise this stretch: Cys-24–Cys-133 and Cys-48–Cys-88. Asn-38 carries N-linked (GlcNAc...) asparagine glycosylation. A glycan (N-linked (GlcNAc...) asparagine) is linked at Asn-101.

This sequence belongs to the IL-4/IL-13 family.

It localises to the secreted. In terms of biological role, participates in at least several B-cell activation processes as well as of other cell types. It is a costimulator of DNA-synthesis. It induces the expression of class II MHC molecules on resting B-cells. It enhances both secretion and cell surface expression of IgE and IgG1. It also regulates the expression of the low affinity Fc receptor for IgE (CD23) on both lymphocytes and monocytes. Positively regulates IL31RA expression in macrophages. Stimulates autophagy in dendritic cells by interfering with mTORC1 signaling and through the induction of RUFY4. The polypeptide is Interleukin-4 (IL4) (Equus caballus (Horse)).